The sequence spans 519 residues: Glucoamylase GLA1 (519 aa).

Residues 1–27 (MRFGVLISVFVAIVSALPLQEGPLNKR) form the signal peptide. N-linked (GlcNAc...) asparagine glycosylation is found at Asn115 and Asn127. Substrate is bound at residue Trp166. Asn205 carries an N-linked (GlcNAc...) asparagine glycan. Residue Asp234 is the Proton acceptor of the active site. Glu237 (proton donor) is an active-site residue.

It belongs to the glycosyl hydrolase 15 family.

It catalyses the reaction Hydrolysis of terminal (1-&gt;4)-linked alpha-D-glucose residues successively from non-reducing ends of the chains with release of beta-D-glucose.. The sequence is that of Glucoamylase GLA1 (GLA1) from Saccharomycopsis fibuligera (Yeast).